Here is a 430-residue protein sequence, read N- to C-terminus: MAAAAEQQQQQQQQGFRPLDEASLVAYIKATPALAARLGGSLDALTIKEVGDGNLNFVYIVLSDAGSVVIKQALPYIRCVGDSWPMTRERAYFEASALQKHRGLCPDHVPEVYHFDRAMSLIGMRYIEPPHIILRKGLIAGVEYPLLAEHMADYMAKTLFFTSLLYNSTTDHKKGVAQYCDNVEMCRLTEQVVFSDPYMLAKYNRCTSPFLDNDAAAVREDAELKLEIAELKSMFIERAQALLHGDLHTGSIMVTPDSTQVIDPEFAFYGPMGYDIGAFLGNLILAYFSQDGHADQANDRKAYKKWILKTIEDSWNLFHKKFVELWNKHKDGNGEAYLPPIYNSSELLCLAQKKYMTSLFHDSLGFGSAKMIRRIVGIAHVEDFESIEDASKRASCERRALNCAKAILKGRRQFESIGQVIVHVQSFDRD.

ATP is bound by residues 52-56 (DGNLN), Lys71, and 125-127 (RYI). Residue Asn56 coordinates substrate. Asp246 contributes to the substrate binding site. 263–265 (DPE) contributes to the ATP binding site. Arg373 provides a ligand contact to substrate.

Belongs to the methylthioribose kinase family. Homodimer.

It carries out the reaction 5-(methylsulfanyl)-D-ribose + ATP = 5-(methylsulfanyl)-alpha-D-ribose 1-phosphate + ADP + H(+). The protein operates within amino-acid biosynthesis; L-methionine biosynthesis via salvage pathway; S-methyl-5-thio-alpha-D-ribose 1-phosphate from S-methyl-5'-thioadenosine (hydrolase route): step 2/2. In terms of biological role, catalyzes the phosphorylation of methylthioribose into methylthioribose-1-phosphate. This chain is Methylthioribose kinase 1, found in Oryza sativa subsp. japonica (Rice).